A 712-amino-acid chain; its full sequence is Polyribonucleotide nucleotidyltransferase (712 aa).

Residues aspartate 487 and aspartate 493 each coordinate Mg(2+). The 60-residue stretch at proline 554–isoleucine 613 folds into the KH domain. Residues glycine 623 to lysine 691 enclose the S1 motif domain.

The protein belongs to the polyribonucleotide nucleotidyltransferase family. The cofactor is Mg(2+).

It is found in the cytoplasm. The catalysed reaction is RNA(n+1) + phosphate = RNA(n) + a ribonucleoside 5'-diphosphate. In terms of biological role, involved in mRNA degradation. Catalyzes the phosphorolysis of single-stranded polyribonucleotides processively in the 3'- to 5'-direction. In Bacillus cereus (strain ATCC 14579 / DSM 31 / CCUG 7414 / JCM 2152 / NBRC 15305 / NCIMB 9373 / NCTC 2599 / NRRL B-3711), this protein is Polyribonucleotide nucleotidyltransferase.